A 425-amino-acid polypeptide reads, in one-letter code: Serine--tRNA ligase (425 aa).

Residue 233-235 coordinates L-serine; sequence TAE. 264 to 266 serves as a coordination point for ATP; the sequence is RAE. Residue glutamate 287 coordinates L-serine. Residue 351–354 coordinates ATP; that stretch reads EISS. Serine 387 is an L-serine binding site.

The protein belongs to the class-II aminoacyl-tRNA synthetase family. Type-1 seryl-tRNA synthetase subfamily. As to quaternary structure, homodimer. The tRNA molecule binds across the dimer.

The protein resides in the cytoplasm. It carries out the reaction tRNA(Ser) + L-serine + ATP = L-seryl-tRNA(Ser) + AMP + diphosphate + H(+). The catalysed reaction is tRNA(Sec) + L-serine + ATP = L-seryl-tRNA(Sec) + AMP + diphosphate + H(+). Its pathway is aminoacyl-tRNA biosynthesis; selenocysteinyl-tRNA(Sec) biosynthesis; L-seryl-tRNA(Sec) from L-serine and tRNA(Sec): step 1/1. Catalyzes the attachment of serine to tRNA(Ser). Is also able to aminoacylate tRNA(Sec) with serine, to form the misacylated tRNA L-seryl-tRNA(Sec), which will be further converted into selenocysteinyl-tRNA(Sec). The sequence is that of Serine--tRNA ligase from Clostridium botulinum (strain Eklund 17B / Type B).